The following is a 285-amino-acid chain: 4-diphosphocytidyl-2-C-methyl-D-erythritol kinase (285 aa).

Lys11 is an active-site residue. 93–103 (PLAAGLAGGSA) contributes to the ATP binding site. Asp135 is a catalytic residue.

It belongs to the GHMP kinase family. IspE subfamily.

It carries out the reaction 4-CDP-2-C-methyl-D-erythritol + ATP = 4-CDP-2-C-methyl-D-erythritol 2-phosphate + ADP + H(+). It functions in the pathway isoprenoid biosynthesis; isopentenyl diphosphate biosynthesis via DXP pathway; isopentenyl diphosphate from 1-deoxy-D-xylulose 5-phosphate: step 3/6. In terms of biological role, catalyzes the phosphorylation of the position 2 hydroxy group of 4-diphosphocytidyl-2C-methyl-D-erythritol. The polypeptide is 4-diphosphocytidyl-2-C-methyl-D-erythritol kinase (Moorella thermoacetica (strain ATCC 39073 / JCM 9320)).